A 569-amino-acid polypeptide reads, in one-letter code: 4-coumarate--CoA ligase 2 (569 aa).

ATP is bound by residues Ser219, Ser220, Gly221, Thr222, Thr223, and Lys227. Residues Phe269 and Ser273 each contribute to the (E)-4-coumaroyl-AMP site. Arg290 provides a ligand contact to CoA. The tract at residues 292-361 is SBD1; sequence EMGAMLGAIE…ARLPQAIFGQ (70 aa). Residues Ala339, Gln361, Gly362, Thr366, and Met374 each contribute to the (E)-4-coumaroyl-AMP site. Gln361, Gly362, and Thr366 together coordinate ATP. Positions 362–429 are SBD2; it reads GYGMTEAGPV…IRGPQIMKGY (68 aa). Residues Asp450 and Arg465 each coordinate ATP. Residues Lys467 and Lys471 each coordinate (E)-4-coumaroyl-AMP. 2 residues coordinate CoA: Lys473 and Gly474. Lys556 provides a ligand contact to ATP.

It belongs to the ATP-dependent AMP-binding enzyme family. Requires Mg(2+) as cofactor. As to expression, expressed in roots, stems, leaf blades, leaf sheaths and spikelets.

The enzyme catalyses (E)-ferulate + ATP + CoA = (E)-feruloyl-CoA + AMP + diphosphate. It catalyses the reaction (E)-4-coumarate + ATP + CoA = (E)-4-coumaroyl-CoA + AMP + diphosphate. The catalysed reaction is (E)-caffeate + ATP + CoA = (E)-caffeoyl-CoA + AMP + diphosphate. It carries out the reaction (E)-cinnamate + ATP + CoA = (E)-cinnamoyl-CoA + AMP + diphosphate. The enzyme catalyses (E)-ferulate + ATP + H(+) = (E)-feruloyl-AMP + diphosphate. It catalyses the reaction (E)-feruloyl-AMP + CoA = (E)-feruloyl-CoA + AMP + H(+). The catalysed reaction is (E)-4-coumarate + ATP + H(+) = (E)-4-coumaroyl-AMP + diphosphate. It carries out the reaction (E)-4-coumaroyl-AMP + CoA = (E)-4-coumaroyl-CoA + AMP + H(+). The enzyme catalyses (E)-caffeate + ATP + H(+) = (E)-caffeoyl-AMP + diphosphate. It catalyses the reaction (E)-caffeoyl-AMP + CoA = (E)-caffeoyl-CoA + AMP + H(+). It participates in phytoalexin biosynthesis; 3,4',5-trihydroxystilbene biosynthesis; 3,4',5-trihydroxystilbene from trans-4-coumarate: step 1/2. In terms of biological role, involved in the phenylpropanoid metabolism by mediating the activation of a number of hydroxycinnamates for the biosynthesis of monolignols and other phenolic secondary metabolites. Catalyzes the formation of CoA esters of cinnamate, 4-coumarate, caffeate and ferulate. Is more efficient with substrates in the following order: ferulate &gt; 4-coumarate &gt; caffeate &gt; cinnamate. Cannot convert sinapate to its corresponding CoA ester. Follows a two-step reaction mechanism, wherein the carboxylate substrate first undergoes adenylation by ATP, followed by a thioesterification in the presence of CoA to yield the final CoA thioester. This Oryza sativa subsp. japonica (Rice) protein is 4-coumarate--CoA ligase 2.